The following is a 331-amino-acid chain: Ketol-acid reductoisomerase (NADP(+)) (331 aa).

In terms of domain architecture, KARI N-terminal Rossmann spans 2–182; that stretch reads ARLYYDADAN…GGTRAGILET (181 aa). NADP(+) is bound by residues 25–28, Ser-51, Ser-53, and 83–86; these read YGSQ and DEVQ. His-108 is an active-site residue. Gly-134 lines the NADP(+) pocket. The KARI C-terminal knotted domain maps to 183-328; it reads TFREETETDL…KDLRAMFSWT (146 aa). Mg(2+) is bound by residues Asp-191, Glu-195, Glu-227, and Glu-231. Substrate is bound at residue Ser-252.

Belongs to the ketol-acid reductoisomerase family. The cofactor is Mg(2+).

The enzyme catalyses (2R)-2,3-dihydroxy-3-methylbutanoate + NADP(+) = (2S)-2-acetolactate + NADPH + H(+). The catalysed reaction is (2R,3R)-2,3-dihydroxy-3-methylpentanoate + NADP(+) = (S)-2-ethyl-2-hydroxy-3-oxobutanoate + NADPH + H(+). It functions in the pathway amino-acid biosynthesis; L-isoleucine biosynthesis; L-isoleucine from 2-oxobutanoate: step 2/4. It participates in amino-acid biosynthesis; L-valine biosynthesis; L-valine from pyruvate: step 2/4. Involved in the biosynthesis of branched-chain amino acids (BCAA). Catalyzes an alkyl-migration followed by a ketol-acid reduction of (S)-2-acetolactate (S2AL) to yield (R)-2,3-dihydroxy-isovalerate. In the isomerase reaction, S2AL is rearranged via a Mg-dependent methyl migration to produce 3-hydroxy-3-methyl-2-ketobutyrate (HMKB). In the reductase reaction, this 2-ketoacid undergoes a metal-dependent reduction by NADPH to yield (R)-2,3-dihydroxy-isovalerate. This Acaryochloris marina (strain MBIC 11017) protein is Ketol-acid reductoisomerase (NADP(+)).